Reading from the N-terminus, the 342-residue chain is N-acetyl-gamma-glutamyl-phosphate reductase (342 aa).

Residue Cys-148 is part of the active site.

This sequence belongs to the NAGSA dehydrogenase family. Type 1 subfamily.

It localises to the cytoplasm. The enzyme catalyses N-acetyl-L-glutamate 5-semialdehyde + phosphate + NADP(+) = N-acetyl-L-glutamyl 5-phosphate + NADPH + H(+). The protein operates within amino-acid biosynthesis; L-arginine biosynthesis; N(2)-acetyl-L-ornithine from L-glutamate: step 3/4. In terms of biological role, catalyzes the NADPH-dependent reduction of N-acetyl-5-glutamyl phosphate to yield N-acetyl-L-glutamate 5-semialdehyde. This chain is N-acetyl-gamma-glutamyl-phosphate reductase, found in Methanococcus vannielii (strain ATCC 35089 / DSM 1224 / JCM 13029 / OCM 148 / SB).